Consider the following 85-residue polypeptide: Putative membrane protein insertion efficiency factor (85 aa).

It belongs to the UPF0161 family.

Its subcellular location is the cell membrane. Could be involved in insertion of integral membrane proteins into the membrane. This is Putative membrane protein insertion efficiency factor from Buchnera aphidicola subsp. Baizongia pistaciae (strain Bp).